A 219-amino-acid chain; its full sequence is Ribose-5-phosphate isomerase A (219 aa).

Residues 28 to 31, 81 to 84, and 94 to 97 each bind substrate; these read TGST, DGAD, and KGGG. The Proton acceptor role is filled by E103. K121 serves as a coordination point for substrate.

The protein belongs to the ribose 5-phosphate isomerase family. Homodimer.

It carries out the reaction aldehydo-D-ribose 5-phosphate = D-ribulose 5-phosphate. It functions in the pathway carbohydrate degradation; pentose phosphate pathway; D-ribose 5-phosphate from D-ribulose 5-phosphate (non-oxidative stage): step 1/1. Functionally, catalyzes the reversible conversion of ribose-5-phosphate to ribulose 5-phosphate. The chain is Ribose-5-phosphate isomerase A from Photobacterium profundum (strain SS9).